Here is a 527-residue protein sequence, read N- to C-terminus: Probable malate:quinone oxidoreductase 2 (527 aa).

It belongs to the MQO family. FAD is required as a cofactor.

The catalysed reaction is (S)-malate + a quinone = a quinol + oxaloacetate. It functions in the pathway carbohydrate metabolism; tricarboxylic acid cycle; oxaloacetate from (S)-malate (quinone route): step 1/1. In Pseudomonas putida (strain ATCC 47054 / DSM 6125 / CFBP 8728 / NCIMB 11950 / KT2440), this protein is Probable malate:quinone oxidoreductase 2.